A 429-amino-acid polypeptide reads, in one-letter code: Adenylosuccinate synthetase (429 aa).

GTP contacts are provided by residues Gly-12–Lys-18 and Gly-40–Thr-42. Residue Asp-13 is the Proton acceptor of the active site. Residues Asp-13 and Gly-40 each contribute to the Mg(2+) site. IMP contacts are provided by residues Asp-13–Lys-16, Asn-38–His-41, Thr-128, Arg-142, Gln-223, Thr-238, and Arg-302. His-41 serves as the catalytic Proton donor. Residue Thr-298–Arg-304 participates in substrate binding. GTP contacts are provided by residues Arg-304, Leu-330–Asp-332, and Ser-412–Gly-414.

This sequence belongs to the adenylosuccinate synthetase family. As to quaternary structure, homodimer. The cofactor is Mg(2+).

It is found in the cytoplasm. It catalyses the reaction IMP + L-aspartate + GTP = N(6)-(1,2-dicarboxyethyl)-AMP + GDP + phosphate + 2 H(+). It participates in purine metabolism; AMP biosynthesis via de novo pathway; AMP from IMP: step 1/2. Functionally, plays an important role in the de novo pathway of purine nucleotide biosynthesis. Catalyzes the first committed step in the biosynthesis of AMP from IMP. In Lactobacillus acidophilus (strain ATCC 700396 / NCK56 / N2 / NCFM), this protein is Adenylosuccinate synthetase.